The chain runs to 252 residues: Isoprenyl transferase (252 aa).

Asp32 is a catalytic residue. Asp32 lines the Mg(2+) pocket. Substrate is bound by residues 33-36, Trp37, Arg45, His49, and 77-79; these read GNGR and STE. Asn80 serves as the catalytic Proton acceptor. Substrate-binding positions include Trp81, Arg83, Arg200, and 206–208; that span reads RLS. Glu219 contacts Mg(2+).

This sequence belongs to the UPP synthase family. Homodimer. The cofactor is Mg(2+).

Catalyzes the condensation of isopentenyl diphosphate (IPP) with allylic pyrophosphates generating different type of terpenoids. This Oceanobacillus iheyensis (strain DSM 14371 / CIP 107618 / JCM 11309 / KCTC 3954 / HTE831) protein is Isoprenyl transferase.